A 500-amino-acid polypeptide reads, in one-letter code: Cytochrome P450 2D3 (500 aa).

Residue Cys-446 coordinates heme.

The protein belongs to the cytochrome P450 family. Requires heme as cofactor.

It localises to the endoplasmic reticulum membrane. Its subcellular location is the microsome membrane. It carries out the reaction an organic molecule + reduced [NADPH--hemoprotein reductase] + O2 = an alcohol + oxidized [NADPH--hemoprotein reductase] + H2O + H(+). Functionally, cytochromes P450 are a group of heme-thiolate monooxygenases. In liver microsomes, this enzyme is involved in an NADPH-dependent electron transport pathway. It oxidizes a variety of structurally unrelated compounds, including steroids, fatty acids, and xenobiotics. This chain is Cytochrome P450 2D3 (Cyp2d3), found in Rattus norvegicus (Rat).